The primary structure comprises 299 residues: MGGPRALLAALWALEAAGTAALRIGAFNIQSFGDSKVSDPACGSIIAKILAGYDLALVQEVRDPDLSAVSALMEQINSVSEHEYSFVSSQPLGRDQYKEMYLFVYRKDAVSVVDTYLYPDPEDVFSREPFVVKFSAPGTGERAPPLPSRRALTPPPLPAAAQNLVLIPLHAAPHQAVAEIDALYDVYLDVIDKWGTDDMLFLGDFNADCSYVRAQDWAAIRLRSSEVFKWLIPDSADTTVGNSDCAYDRIVACGARLRRSLKPQSATVHDFQEEFGLDQTQALAISDHFPVEVTLKFHR.

Residues 1-20 (MGGPRALLAALWALEAAGTA) form the signal peptide. Active-site residues include Glu-99 and His-170. A disulfide bridge connects residues Cys-209 and Cys-245.

The protein belongs to the DNase I family. Mg(2+) serves as cofactor. Requires Ca(2+) as cofactor. In terms of tissue distribution, preferentially expressed in the skin and up-regulated during keratinocytes differentiation. Highly abundant (at protein level) in the stratum granulosum.

The protein resides in the cytoplasm. The protein localises to the secreted. Its function is as follows. Divalent cation-dependent acid DNA endonuclease involved in the breakdown of the nucleus during corneocyte formation of epidermal keratinocytes. May play an immune role by eliminating harmful DNA released into the extracellular environment by damaged epidermal cells. The chain is Deoxyribonuclease-1-like 2 (DNASE1L2) from Homo sapiens (Human).